The primary structure comprises 395 residues: Probable peptidoglycan glycosyltransferase FtsW (395 aa).

The Cytoplasmic segment spans residues 1–24 (MADLAAGVAERGPRLSLWSSLDQR). Residues 25 to 45 (LVWVVAATALLGLVMVASASI) form a helical membrane-spanning segment. Residues 46–62 (SMAEQATGDPFYFFKRQ) lie on the Periplasmic side of the membrane. A helical transmembrane segment spans residues 63–83 (IFFALLGLGMALALLQIPLAT). Residues 84 to 86 (WER) lie on the Cytoplasmic side of the membrane. The chain crosses the membrane as a helical span at residues 87–107 (AGPGLLLGALALLVLVLIPGV). The Periplasmic portion of the chain corresponds to 108–116 (GREVNGAVR). A helical transmembrane segment spans residues 117–137 (WIPLGVFNLQVAEVVKVLLAL). Topologically, residues 138–152 (YLAGFLVRRQQQLRT) are cytoplasmic. A helical transmembrane segment spans residues 153-173 (SMAAFLVPVLVSAACAFLLLL). The Periplasmic portion of the chain corresponds to 174-178 (QPDFG). Residues 179-199 (TALMLMALAVGLLYLAGAPLW) form a helical membrane-spanning segment. Residue R200 is a topological domain, cytoplasmic. A helical membrane pass occupies residues 201–221 (FAALVGVLAAAAAALVVYSPY). Over 222–276 (RWQRVTAFMDPWSDPFNTGFQLTQSLIAIGRGDWLGVGLGGSVQKLFYLPEAHTD) the chain is Periplasmic. A helical membrane pass occupies residues 277–297 (FVFSVLAEELGWLGVLAVVLL). Over 298-316 (FSYIVWRAMAVGWQCHRHR) the chain is Cytoplasmic. The helical transmembrane segment at 317–337 (LPFAGYLAWAVGLALGLQAFI) threads the bilayer. The Periplasmic segment spans residues 338–352 (NMGVATGLLPTKGLT). Residues 353-373 (LPLFSYGGSSALATGAMVGLL) form a helical membrane-spanning segment. Residues 374–395 (LRCGYELAQARAEGRRPEEAAS) are Cytoplasmic-facing.

Belongs to the SEDS family. FtsW subfamily.

Its subcellular location is the cell inner membrane. It catalyses the reaction [GlcNAc-(1-&gt;4)-Mur2Ac(oyl-L-Ala-gamma-D-Glu-L-Lys-D-Ala-D-Ala)](n)-di-trans,octa-cis-undecaprenyl diphosphate + beta-D-GlcNAc-(1-&gt;4)-Mur2Ac(oyl-L-Ala-gamma-D-Glu-L-Lys-D-Ala-D-Ala)-di-trans,octa-cis-undecaprenyl diphosphate = [GlcNAc-(1-&gt;4)-Mur2Ac(oyl-L-Ala-gamma-D-Glu-L-Lys-D-Ala-D-Ala)](n+1)-di-trans,octa-cis-undecaprenyl diphosphate + di-trans,octa-cis-undecaprenyl diphosphate + H(+). It functions in the pathway cell wall biogenesis; peptidoglycan biosynthesis. Its function is as follows. Peptidoglycan polymerase that is essential for cell division. The sequence is that of Probable peptidoglycan glycosyltransferase FtsW from Halorhodospira halophila (strain DSM 244 / SL1) (Ectothiorhodospira halophila (strain DSM 244 / SL1)).